The primary structure comprises 197 residues: NADH-quinone oxidoreductase subunit B (197 aa).

[4Fe-4S] cluster is bound by residues cysteine 76, cysteine 77, cysteine 141, and cysteine 171.

It belongs to the complex I 20 kDa subunit family. In terms of assembly, NDH-1 is composed of 14 different subunits. Subunits NuoB, C, D, E, F, and G constitute the peripheral sector of the complex. Requires [4Fe-4S] cluster as cofactor.

The protein resides in the cell inner membrane. It carries out the reaction a quinone + NADH + 5 H(+)(in) = a quinol + NAD(+) + 4 H(+)(out). Functionally, NDH-1 shuttles electrons from NADH, via FMN and iron-sulfur (Fe-S) centers, to quinones in the respiratory chain. The immediate electron acceptor for the enzyme in this species is believed to be ubiquinone. Couples the redox reaction to proton translocation (for every two electrons transferred, four hydrogen ions are translocated across the cytoplasmic membrane), and thus conserves the redox energy in a proton gradient. The sequence is that of NADH-quinone oxidoreductase subunit B from Methylobacterium nodulans (strain LMG 21967 / CNCM I-2342 / ORS 2060).